A 426-amino-acid chain; its full sequence is Serine/threonine-protein kinase ssn3 (426 aa).

The region spanning 41-368 (YHIVGFISSG…AQEALEHPYF (328 aa)) is the Protein kinase domain. Residues 47 to 55 (ISSGTYGRV) and Lys-71 contribute to the ATP site. Catalysis depends on Asp-173, which acts as the Proton acceptor. Positions 390 to 426 (RVTQDDNDIRSGSLPGTKRSGLPDDSLMGRAAKRLKE) are disordered.

Belongs to the protein kinase superfamily. CMGC Ser/Thr protein kinase family. CDC2/CDKX subfamily. Component of the srb8-11 complex, a regulatory module of the Mediator complex. Mg(2+) is required as a cofactor.

The protein resides in the nucleus. The enzyme catalyses L-seryl-[protein] + ATP = O-phospho-L-seryl-[protein] + ADP + H(+). The catalysed reaction is L-threonyl-[protein] + ATP = O-phospho-L-threonyl-[protein] + ADP + H(+). It catalyses the reaction [DNA-directed RNA polymerase] + ATP = phospho-[DNA-directed RNA polymerase] + ADP + H(+). In terms of biological role, component of the srb8-11 complex. The srb8-11 complex is a regulatory module of the Mediator complex which is itself involved in regulation of basal and activated RNA polymerase II-dependent transcription. The srb8-11 complex may be involved in the transcriptional repression of a subset of genes regulated by Mediator. It may inhibit the association of the Mediator complex with RNA polymerase II to form the holoenzyme complex. The srb8-11 complex phosphorylates the C-terminal domain (CTD) of the largest subunit of RNA polymerase II. The polypeptide is Serine/threonine-protein kinase ssn3 (ssn3) (Aspergillus clavatus (strain ATCC 1007 / CBS 513.65 / DSM 816 / NCTC 3887 / NRRL 1 / QM 1276 / 107)).